We begin with the raw amino-acid sequence, 124 residues long: SPbeta prophage-derived uncharacterized protein YoqO (124 aa).

2 helical membrane-spanning segments follow: residues 54-74 (LVVICLTFFVLALGIHKLLSF) and 88-108 (VIFILQITLIIGSVAIAISIM).

The protein resides in the cell membrane. The polypeptide is SPbeta prophage-derived uncharacterized protein YoqO (yoqO) (Bacillus subtilis (strain 168)).